We begin with the raw amino-acid sequence, 2263 residues long: Collagen alpha-6(VI) chain (2263 aa).

The N-terminal stretch at 1-19 is a signal peptide; the sequence is MMLLILFLVIICSHISVNQ. The nonhelical region stretch occupies residues 20-1391; it reads DSGPEYADVV…TCCCLFCKCI (1372 aa). VWFA domains are found at residues 27 to 206, 229 to 411, 436 to 606, 622 to 791, and 809 to 982; these read DVVF…IKDV, DVVF…RNQI, DIYL…RNQV, DIMF…EDDL, and DVVF…FSDV. N198, N275, N288, N347, and N520 each carry an N-linked (GlcNAc...) asparagine glycan. N-linked (GlcNAc...) asparagine glycans are attached at residues N930 and N988. 2 VWFA domains span residues 1000–1171 and 1187–1371; these read DLVF…NKRI and DVVV…GSRL. A glycan (N-linked (GlcNAc...) asparagine) is linked at N1290. The segment at 1392–1725 is triple-helical region; sequence GGDGTMGDPG…GRKGVKGAKG (334 aa). The disordered stretch occupies residues 1397-1723; sequence MGDPGPPGKR…PPGRKGVKGA (327 aa). Residues 1498 to 1508 show a composition bias toward basic and acidic residues; it reads TPGDRGAKGLR. The Cell attachment site signature appears at 1508-1510; that stretch reads RGD. Residues 1547–1559 show a composition bias toward basic residues; it reads SRRKTAAHGRRGH. The span at 1680–1689 shows a compositional bias: gly residues; the sequence is GDPGGPGETG. The segment at 1726–2263 is nonhelical region; it reads LASFSTCELI…MIESAPKQHD (538 aa). 2 VWFA domains span residues 1757-1937 and 1965-2166; these read ELVF…ERLQ and DAAF…INSI.

The protein belongs to the type VI collagen family. In terms of assembly, trimers composed of three different chains: alpha-1(VI), alpha-2(VI), and alpha-3(VI) or alpha-5(VI) or alpha-6(VI). Post-translationally, prolines at the third position of the tripeptide repeating unit (G-X-Y) are hydroxylated in some or all of the chains.

Its subcellular location is the secreted. The protein localises to the extracellular space. It is found in the extracellular matrix. In terms of biological role, collagen VI acts as a cell-binding protein. This is Collagen alpha-6(VI) chain (COL6A6) from Homo sapiens (Human).